The primary structure comprises 648 residues: Primary amine oxidase (648 aa).

The propeptide occupies Met1–Ala9. Ala299–Met310 serves as a coordination point for substrate. The active-site Proton acceptor is Asp301. Cys320 and Cys346 are oxidised to a cystine. Val382–Tyr387 is a binding site for substrate. The active-site Schiff-base intermediate with substrate; via topaquinone is Tyr385. Tyr385 carries the 2',4',5'-topaquinone modification. Cu cation is bound by residues His436 and His438. Residues Asp445, Phe446, and Asp584 each contribute to the Mn(2+) site. His595 contributes to the Cu cation binding site.

Belongs to the copper/topaquinone oxidase family. Homodimer. Requires Cu cation as cofactor. Zn(2+) serves as cofactor. L-topaquinone is required as a cofactor. The cofactor is Mn(2+). Post-translationally, topaquinone (TPQ) is generated by copper-dependent autoxidation of a specific tyrosyl residue.

It carries out the reaction a primary methyl amine + O2 + H2O = an aldehyde + H2O2 + NH4(+). In terms of biological role, the exact function of MaoXI is not known. The sequence is that of Primary amine oxidase (maoI) from Arthrobacter sp. (strain P1).